A 553-amino-acid chain; its full sequence is uncharacterized protein (553 aa).

A signal peptide spans 1 to 31 (MEDIMTSLLVATSRVVVTISLAYVPVKSAFA). Residue Ser207 is the Acyl-ester intermediate of the active site. An intrachain disulfide couples Cys275 to Cys292. Ca(2+)-binding residues include Asp276, Asp279, Val281, Asp283, and Leu285. Catalysis depends on charge relay system residues Asp444 and His482. Cysteines 528 and 550 form a disulfide.

Belongs to the tannase family.

This is an uncharacterized protein from Agrobacterium fabrum (strain C58 / ATCC 33970) (Agrobacterium tumefaciens (strain C58)).